A 135-amino-acid polypeptide reads, in one-letter code: Small ribosomal subunit protein uS12 (135 aa).

3-methylthioaspartic acid is present on aspartate 89. A disordered region spans residues 101-135 (SLDTSGVADRKQSRSKYGAKQPKAGAAAPVKGKRR). Residues 116–135 (KYGAKQPKAGAAAPVKGKRR) show a composition bias toward low complexity.

Belongs to the universal ribosomal protein uS12 family. As to quaternary structure, part of the 30S ribosomal subunit. Contacts proteins S8 and S17. May interact with IF1 in the 30S initiation complex.

Functionally, with S4 and S5 plays an important role in translational accuracy. In terms of biological role, interacts with and stabilizes bases of the 16S rRNA that are involved in tRNA selection in the A site and with the mRNA backbone. Located at the interface of the 30S and 50S subunits, it traverses the body of the 30S subunit contacting proteins on the other side and probably holding the rRNA structure together. The combined cluster of proteins S8, S12 and S17 appears to hold together the shoulder and platform of the 30S subunit. The polypeptide is Small ribosomal subunit protein uS12 (Chlorobium phaeobacteroides (strain DSM 266 / SMG 266 / 2430)).